Consider the following 314-residue polypeptide: Glutathione synthetase (314 aa).

The 187-residue stretch at 125-311 folds into the ATP-grasp domain; sequence EKLAAQLFPQ…IAGQLFDAIE (187 aa). Residue 151–208 participates in ATP binding; the sequence is FVQKQEQAILKPLDGMGGHSIFRSSNGDPNLNVILETLTDGGRTLAIAQRYLQQIIEG. Residues glutamate 282 and asparagine 284 each coordinate Mg(2+).

It belongs to the prokaryotic GSH synthase family. Requires Mg(2+) as cofactor. It depends on Mn(2+) as a cofactor.

It catalyses the reaction gamma-L-glutamyl-L-cysteine + glycine + ATP = glutathione + ADP + phosphate + H(+). It functions in the pathway sulfur metabolism; glutathione biosynthesis; glutathione from L-cysteine and L-glutamate: step 2/2. The polypeptide is Glutathione synthetase (Xylella fastidiosa (strain 9a5c)).